The chain runs to 101 residues: MIHKLTSEERKTQLESLHHWTAVPGRDAIQRSLRFADFNEAFGFMTRVAIKAQEMNHHPEWFNVYNRVDVTLSTHDANGLTERDIKLAHFIDEVGKHAKAA.

It belongs to the pterin-4-alpha-carbinolamine dehydratase family.

The catalysed reaction is (4aS,6R)-4a-hydroxy-L-erythro-5,6,7,8-tetrahydrobiopterin = (6R)-L-erythro-6,7-dihydrobiopterin + H2O. In Burkholderia mallei (strain ATCC 23344), this protein is Putative pterin-4-alpha-carbinolamine dehydratase.